The following is a 404-amino-acid chain: Alanyl-tRNA editing protein AlaX-L (404 aa).

4 residues coordinate Zn(2+): histidine 104, histidine 108, cysteine 202, and histidine 206.

It belongs to the class-II aminoacyl-tRNA synthetase family. Editing domain AlaX-L subfamily. Zn(2+) serves as cofactor.

Its subcellular location is the cytoplasm. Functionally, functions in trans to edit the amino acid moiety from mischarged charged tRNA(Ala). This is Alanyl-tRNA editing protein AlaX-L (alaXL) from Pyrococcus horikoshii (strain ATCC 700860 / DSM 12428 / JCM 9974 / NBRC 100139 / OT-3).